The primary structure comprises 166 residues: Regulatory protein RecX (166 aa).

Belongs to the RecX family.

Its subcellular location is the cytoplasm. Functionally, modulates RecA activity. The chain is Regulatory protein RecX from Escherichia coli O7:K1 (strain IAI39 / ExPEC).